Reading from the N-terminus, the 80-residue chain is Serine palmitoyltransferase small subunit B (80 aa).

Residues 1 to 11 (MDVKHIKDYLS) are Cytoplasmic-facing. A helical transmembrane segment spans residues 12-29 (WLYYQYLLITCSYVLEPW). Residues 30-36 (EQSIFNT) lie on the Lumenal side of the membrane. Residues 37-57 (LLLTIIAMVIYSSYIFIPIHV) traverse the membrane as a helical segment. Residues 58–80 (RLAVEFFSGIFGGQHESTVALMS) are Cytoplasmic-facing.

Belongs to the SPTSS family. SPTSSB subfamily. Component of the serine palmitoyltransferase (SPT) complex, which is composed of SPTLC1, SPTLC2 or SPTLC3 and SPTSSA or SPTSSB. The heterodimer consisting of SPTLC1 and SPTLC2/SPTLC3 forms the catalytic core of the enzyme, while SPTSSA or SPTSSB subunits determine substrate specificity. SPT also interacts with ORMDL proteins, especially ORMDL3, which negatively regulate SPT activity in the presence of ceramides.

The protein localises to the endoplasmic reticulum membrane. It participates in lipid metabolism; sphingolipid metabolism. Functionally, component of the serine palmitoyltransferase multisubunit enzyme (SPT) that catalyzes the initial and rate-limiting step in sphingolipid biosynthesis by condensing L-serine and activated acyl-CoA (most commonly palmitoyl-CoA) to form long-chain bases. The SPT complex is composed of SPTLC1, SPTLC2 or SPTLC3 and SPTSSA or SPTSSB. Within this complex, the heterodimer consisting of SPTLC1 and SPTLC2/SPTLC3 forms the catalytic core. Within the SPT complex, SPTSSB stimulates the catalytic activity and plays a role in substrate specificity. SPT complexes with this subunit showing a preference for longer acyl-CoAs. The SPTLC1-SPTLC2-SPTSSB complex shows a strong preference for C18-CoA substrate, while the SPTLC1-SPTLC3-SPTSSB isozyme displays an ability to use a broader range of acyl-CoAs, without apparent preference. The sequence is that of Serine palmitoyltransferase small subunit B (sptssb) from Xenopus tropicalis (Western clawed frog).